Reading from the N-terminus, the 960-residue chain is Mast/stem cell growth factor receptor Kit (960 aa).

Positions 1–24 (MEGAHLAWELAHAVLLLSLIPAGG) are cleaved as a signal peptide. Residues 25–511 (SVPHEESSLV…IRTHTLFTPL (487 aa)) lie on the Extracellular side of the membrane. Ig-like C2-type domains are found at residues 27 to 102 (PHEE…VFVK), 111 to 194 (DSLI…LNVR), 201 to 294 (PVIT…LKAL), 303 to 396 (ATMN…VYVK), and 399 to 497 (PEIL…FNFA). Disulfide bonds link Cys45/Cys87, Cys126/Cys175, Cys141/Cys172, and Cys222/Cys276. N-linked (GlcNAc...) asparagine glycans are attached at residues Asn76, Asn135, Asn149, Asn269, Asn286, Asn306, Asn318, Asn338, Asn343, Asn356, Asn453, and Asn469. A disulfide bond links Cys414 and Cys481. A helical transmembrane segment spans residues 512–532 (LIAFGVAAGLMCIIVMILVYI). Residues 533 to 960 (YLQKPKYEVQ…TQPLLVREDV (428 aa)) lie on the Cytoplasmic side of the membrane. Residue Tyr554 participates in Mg(2+) binding. 2 positions are modified to phosphotyrosine; by autocatalysis: Tyr554 and Tyr556. Residues 575-913 (LSFGKTLGAG…QIVQLIEQQL (339 aa)) enclose the Protein kinase domain. Residues 582-589 (GAGAFGKV), Lys609, and 657-663 (EYCCYGD) each bind ATP. Phosphotyrosine; by autocatalysis occurs at positions 689 and 706. Asp777 serves as the catalytic Proton acceptor. Arg781 is an ATP binding site. The Mg(2+) site is built by Asn782 and Asp795. 2 positions are modified to phosphotyrosine; by autocatalysis: Tyr808 and Tyr921.

It belongs to the protein kinase superfamily. Tyr protein kinase family. CSF-1/PDGF receptor subfamily. Post-translationally, ubiquitinated. KIT is rapidly ubiquitinated after autophosphorylation induced by KITLG/SCF binding, leading to internalization and degradation. Autophosphorylated on tyrosine residues. KITLG/SCF binding promotes autophosphorylation. Phosphorylated tyrosine residues are important for interaction with specific binding partners. As to expression, high in the brain and testes and also present in the bursa of Fabricus, heart, kidney, lung, spleen thymus and ovary.

The protein localises to the cell membrane. It catalyses the reaction L-tyrosyl-[protein] + ATP = O-phospho-L-tyrosyl-[protein] + ADP + H(+). In terms of biological role, tyrosine-protein kinase that acts as a cell-surface receptor for the cytokine KITLG/SCF and plays an essential role in the regulation of cell survival and proliferation, hematopoiesis, stem cell maintenance, gametogenesis, mast cell development, migration and function, and in melanogenesis. In response to KITLG/SCF binding, KIT can activate several signaling pathways. Promotes phosphorylation of PIK3R1, the regulatory subunit of phosphatidylinositol 3-kinase, and subsequent activation of the kinase AKT1. Activated KIT also transmits signals via GRB2 and activation of RAS, RAF1 and the MAP kinases MAPK1/ERK2 and/or MAPK3/ERK1. Promotes activation of STAT family members STAT1, STAT3, STAT5A and STAT5B. KIT promotes activation of PLCG1, leading to the production of the cellular signaling molecules diacylglycerol and inositol 1,4,5-trisphosphate. KIT signaling is modulated by protein phosphatases, and by rapid internalization and degradation of the receptor. The polypeptide is Mast/stem cell growth factor receptor Kit (KIT) (Gallus gallus (Chicken)).